A 539-amino-acid polypeptide reads, in one-letter code: Phenylacetyl-CoA ligase epaB (539 aa).

Position 188–199 (188–199 (RLFSSGTTGLPK)) interacts with AMP. The AMP-binding stretch occupies residues 449–525 (EVEGVLRNHP…DAIPRNASGK (77 aa)).

This sequence belongs to the ATP-dependent AMP-binding enzyme family.

It participates in secondary metabolite biosynthesis. In terms of biological role, phenylacetyl-CoA ligase; part of the gene cluster that mediates the biosynthesis of nigerpyrone and its derivatives carbonarone A and pestalamide A. The biosynthesis pathway begins with the polyketide assembly by epaA to form phenylacetyl triketide precursor from successive condensation of two malonyl-CoA, presumably with one phenylacetyl-CoA starter unit produced by the phenylacetyl-CoA ligase epaB. For the nigerpyrone biosynthesis, the reactive polyketide chain is released as an aldehyde through the R-domain. A nonenzymatic cyclization and dehydration may create nigerpyrone. For the biosynthesis of carbonarone A and pestalamide A, an extra methyl group is added through the C-methyltransferase domain. Several further steps involving the dehydrogenase orf1, the cytochrome P450 monooxygenase orf2 and the FAD-dependent monooxygenase orf3 are required to form a carbonarone A precursor which is converted to carbonarone A via cyclization. The O-acetyltransferase epaC could catalyze the transfer of 2-methylsuccinyl-CoA, a common intermediate in the ethylmalonyl-CoA pathway, to generate the final product pestalamide A. In Aspergillus niger (strain ATCC MYA-4892 / CBS 513.88 / FGSC A1513), this protein is Phenylacetyl-CoA ligase epaB.